Here is a 306-residue protein sequence, read N- to C-terminus: Large ribosomal subunit protein uL2m (306 aa).

Residues 1 to 60 (MALRVVTRALGSLSLTPRIAAVPGPSLLPAAQVTNNVLLQLPSASMLLPSRPLLTSVALS) constitute a mitochondrion transit peptide.

The protein belongs to the universal ribosomal protein uL2 family. As to quaternary structure, component of the mitochondrial ribosome large subunit (39S) which comprises a 16S rRNA and about 50 distinct proteins.

The protein localises to the mitochondrion. This chain is Large ribosomal subunit protein uL2m (MRPL2), found in Bos taurus (Bovine).